The sequence spans 828 residues: Translation initiation factor IF-2 (828 aa).

Disordered stretches follow at residues 48–76 (SYSGSTTTLSLNKEKGSLETGSSSGSEEF) and 112–137 (ASQEDPIEVEQEESSDTNKVKEEPKI). Residues 49–58 (YSGSTTTLSL) are compositionally biased toward polar residues. Positions 65-74 (LETGSSSGSE) are enriched in low complexity. The segment covering 116–126 (DPIEVEQEESS) has biased composition (acidic residues). Basic and acidic residues predominate over residues 127 to 137 (DTNKVKEEPKI). The tr-type G domain maps to 326–496 (SRAPVVTVMG…LLIAEMQNLK (171 aa)). Residues 335-342 (GHVDHGKT) are G1. 335 to 342 (GHVDHGKT) contacts GTP. Residues 360–364 (GITQH) are G2. A G3 region spans residues 382–385 (DTPG). GTP-binding positions include 382-386 (DTPGH) and 436-439 (NKID). Residues 436-439 (NKID) are G4. The segment at 472–474 (SAL) is G5.

Belongs to the TRAFAC class translation factor GTPase superfamily. Classic translation factor GTPase family. IF-2 subfamily.

It is found in the cytoplasm. One of the essential components for the initiation of protein synthesis. Protects formylmethionyl-tRNA from spontaneous hydrolysis and promotes its binding to the 30S ribosomal subunits. Also involved in the hydrolysis of GTP during the formation of the 70S ribosomal complex. This is Translation initiation factor IF-2 from Rickettsia bellii (strain RML369-C).